A 995-amino-acid polypeptide reads, in one-letter code: Bifunctional glutamine synthetase adenylyltransferase/adenylyl-removing enzyme (995 aa).

An adenylyl removase region spans residues 1 to 474; that stretch reads MNHSAPGNAD…HYEKLFEGDD (474 aa). GlnE stretches follow at residues 122 to 333 and 637 to 853; these read RRMK…MKRQ and SYEE…MRRA. Positions 479–995 are adenylyl transferase; that stretch reads AKLPALDYSA…LEGTSPASAR (517 aa).

The protein belongs to the GlnE family. Requires Mg(2+) as cofactor.

The enzyme catalyses [glutamine synthetase]-O(4)-(5'-adenylyl)-L-tyrosine + phosphate = [glutamine synthetase]-L-tyrosine + ADP. The catalysed reaction is [glutamine synthetase]-L-tyrosine + ATP = [glutamine synthetase]-O(4)-(5'-adenylyl)-L-tyrosine + diphosphate. Functionally, involved in the regulation of glutamine synthetase GlnA, a key enzyme in the process to assimilate ammonia. When cellular nitrogen levels are high, the C-terminal adenylyl transferase (AT) inactivates GlnA by covalent transfer of an adenylyl group from ATP to specific tyrosine residue of GlnA, thus reducing its activity. Conversely, when nitrogen levels are low, the N-terminal adenylyl removase (AR) activates GlnA by removing the adenylyl group by phosphorolysis, increasing its activity. The regulatory region of GlnE binds the signal transduction protein PII (GlnB) which indicates the nitrogen status of the cell. This chain is Bifunctional glutamine synthetase adenylyltransferase/adenylyl-removing enzyme, found in Bradyrhizobium diazoefficiens (strain JCM 10833 / BCRC 13528 / IAM 13628 / NBRC 14792 / USDA 110).